The primary structure comprises 508 residues: Photosystem II CP47 reaction center protein (508 aa).

6 helical membrane-spanning segments follow: residues 21–36 (SVHI…WAGS), 101–115 (IVFS…IWHW), 140–156 (GIHL…FGAF), 203–218 (IAAG…FHLS), 237–252 (VLSS…AFVV), and 457–472 (SFAL…HGSR).

It belongs to the PsbB/PsbC family. PsbB subfamily. In terms of assembly, PSII is composed of 1 copy each of membrane proteins PsbA, PsbB, PsbC, PsbD, PsbE, PsbF, PsbH, PsbI, PsbJ, PsbK, PsbL, PsbM, PsbT, PsbX, PsbY, PsbZ, Psb30/Ycf12, at least 3 peripheral proteins of the oxygen-evolving complex and a large number of cofactors. It forms dimeric complexes. Requires Binds multiple chlorophylls. PSII binds additional chlorophylls, carotenoids and specific lipids. as cofactor.

It is found in the plastid. The protein localises to the chloroplast thylakoid membrane. One of the components of the core complex of photosystem II (PSII). It binds chlorophyll and helps catalyze the primary light-induced photochemical processes of PSII. PSII is a light-driven water:plastoquinone oxidoreductase, using light energy to abstract electrons from H(2)O, generating O(2) and a proton gradient subsequently used for ATP formation. The chain is Photosystem II CP47 reaction center protein from Lobularia maritima (Sweet alyssum).